The following is a 131-amino-acid chain: Small ribosomal subunit protein uS8 (131 aa).

Belongs to the universal ribosomal protein uS8 family. In terms of assembly, part of the 30S ribosomal subunit. Contacts proteins S5 and S12.

In terms of biological role, one of the primary rRNA binding proteins, it binds directly to 16S rRNA central domain where it helps coordinate assembly of the platform of the 30S subunit. The polypeptide is Small ribosomal subunit protein uS8 (Hydrogenovibrio crunogenus (strain DSM 25203 / XCL-2) (Thiomicrospira crunogena)).